We begin with the raw amino-acid sequence, 429 residues long: Adenylosuccinate synthetase (429 aa).

GTP-binding positions include 13–19 and 41–43; these read GDEGKGK and GHT. The Proton acceptor role is filled by Asp14. Residues Asp14 and Gly41 each coordinate Mg(2+). Residues 14 to 17, 39 to 42, Thr130, Arg144, Gln224, Thr239, and Arg303 contribute to the IMP site; these read DEGK and NAGH. Residue His42 is the Proton donor of the active site. A substrate-binding site is contributed by 299 to 305; sequence ATTGRAR. GTP contacts are provided by residues Arg305, 331 to 333, and 412 to 414; these read KLD and STG.

The protein belongs to the adenylosuccinate synthetase family. As to quaternary structure, homodimer. Requires Mg(2+) as cofactor.

The protein resides in the cytoplasm. It carries out the reaction IMP + L-aspartate + GTP = N(6)-(1,2-dicarboxyethyl)-AMP + GDP + phosphate + 2 H(+). Its pathway is purine metabolism; AMP biosynthesis via de novo pathway; AMP from IMP: step 1/2. Functionally, plays an important role in the de novo pathway of purine nucleotide biosynthesis. Catalyzes the first committed step in the biosynthesis of AMP from IMP. The polypeptide is Adenylosuccinate synthetase (Psychrobacter sp. (strain PRwf-1)).